A 59-amino-acid polypeptide reads, in one-letter code: Large ribosomal subunit protein uL30 (59 aa).

Belongs to the universal ribosomal protein uL30 family. As to quaternary structure, part of the 50S ribosomal subunit.

The chain is Large ribosomal subunit protein uL30 from Histophilus somni (strain 129Pt) (Haemophilus somnus).